Reading from the N-terminus, the 216-residue chain is Large ribosomal subunit protein uL1y (216 aa).

Belongs to the universal ribosomal protein uL1 family. Interacts with the GTPase NUG2.

The polypeptide is Large ribosomal subunit protein uL1y (RPL10AB) (Arabidopsis thaliana (Mouse-ear cress)).